A 238-amino-acid chain; its full sequence is UPF0758 protein Ajs_3450 (238 aa).

Residues valine 116–valine 238 enclose the MPN domain. 3 residues coordinate Zn(2+): histidine 187, histidine 189, and aspartate 200. The JAMM motif motif lies at histidine 187 to aspartate 200.

The protein belongs to the UPF0758 family.

This is UPF0758 protein Ajs_3450 from Acidovorax sp. (strain JS42).